A 333-amino-acid polypeptide reads, in one-letter code: Mycothiol acetyltransferase (333 aa).

N-acetyltransferase domains lie at 18–170 (PTLS…LPEP) and 176–333 (VTVR…AAAD). A 1D-myo-inositol 2-(L-cysteinylamino)-2-deoxy-alpha-D-glucopyranoside-binding site is contributed by E46. Residue 98–100 (IVV) coordinates acetyl-CoA. 1D-myo-inositol 2-(L-cysteinylamino)-2-deoxy-alpha-D-glucopyranoside is bound by residues E203, K242, and E261. Acetyl-CoA contacts are provided by residues 265-267 (VGV) and 272-278 (GGAGLGR). Y299 contributes to the 1D-myo-inositol 2-(L-cysteinylamino)-2-deoxy-alpha-D-glucopyranoside binding site. 304–309 (NERAVR) contacts acetyl-CoA.

Belongs to the acetyltransferase family. MshD subfamily. As to quaternary structure, monomer.

The catalysed reaction is 1D-myo-inositol 2-(L-cysteinylamino)-2-deoxy-alpha-D-glucopyranoside + acetyl-CoA = mycothiol + CoA + H(+). Its function is as follows. Catalyzes the transfer of acetyl from acetyl-CoA to desacetylmycothiol (Cys-GlcN-Ins) to form mycothiol. This Frankia alni (strain DSM 45986 / CECT 9034 / ACN14a) protein is Mycothiol acetyltransferase.